Reading from the N-terminus, the 160-residue chain is Serine-protein kinase RsbW (160 aa).

This sequence belongs to the anti-sigma-factor family.

The enzyme catalyses L-seryl-[protein] + ATP = O-phospho-L-seryl-[protein] + ADP + H(+). It carries out the reaction L-threonyl-[protein] + ATP = O-phospho-L-threonyl-[protein] + ADP + H(+). In terms of biological role, negative regulator of sigma-B activity. Phosphorylates and inactivates its specific antagonist protein, RsbV. Upon phosphorylation of RsbV, RsbW is released and binds to sigma-B, thereby blocking its ability to form an RNA polymerase holoenzyme (E-sigma-B). This chain is Serine-protein kinase RsbW, found in Bacillus cereus (strain G9842).